We begin with the raw amino-acid sequence, 248 residues long: NAD kinase (248 aa).

Asp-45 serves as the catalytic Proton acceptor. NAD(+) is bound by residues 45–46 (DG), Arg-50, 110–111 (NE), and Asp-138.

This sequence belongs to the NAD kinase family. A divalent metal cation is required as a cofactor.

It is found in the cytoplasm. It catalyses the reaction NAD(+) + ATP = ADP + NADP(+) + H(+). Involved in the regulation of the intracellular balance of NAD and NADP, and is a key enzyme in the biosynthesis of NADP. Catalyzes specifically the phosphorylation on 2'-hydroxyl of the adenosine moiety of NAD to yield NADP. The polypeptide is NAD kinase (Sulfurisphaera tokodaii (strain DSM 16993 / JCM 10545 / NBRC 100140 / 7) (Sulfolobus tokodaii)).